Here is a 361-residue protein sequence, read N- to C-terminus: Eukaryotic translation initiation factor 3 subunit F (361 aa).

A disordered region spans residues 1–86 (MATPAVPVSA…PAPALPGPAL (86 aa)). At Ala2 the chain carries N-acetylalanine. Pro residues-rich tracts occupy residues 9–20 (SAPPATPAPVPA) and 30–40 (VPAPTPAPAAA). Residues 41-78 (PVPAAAPASSSDPAAAAATTAAPGQTPASAQAPAQTPA) show a composition bias toward low complexity. Phosphoserine; by CDK11; in vitro is present on Ser50. An MPN domain is found at 96-226 (VRLHPVILAS…IKAYVSTLMG (131 aa)). Lys242 is modified (N6-acetyllysine). Ser262 carries the post-translational modification Phosphoserine.

Belongs to the eIF-3 subunit F family. As to quaternary structure, component of the eukaryotic translation initiation factor 3 (eIF-3) complex, which is composed of 13 subunits: EIF3A, EIF3B, EIF3C, EIF3D, EIF3E, EIF3F, EIF3G, EIF3H, EIF3I, EIF3J, EIF3K, EIF3L and EIF3M. The eIF-3 complex appears to include 3 stable modules: module A is composed of EIF3A, EIF3B, EIF3G and EIF3I; module B is composed of EIF3F, EIF3H, and EIF3M; and module C is composed of EIF3C, EIF3D, EIF3E, EIF3K and EIF3L. EIF3C of module C binds EIF3B of module A and EIF3H of module B, thereby linking the three modules. EIF3J is a labile subunit that binds to the eIF-3 complex via EIF3B. The eIF-3 complex interacts with RPS6KB1 under conditions of nutrient depletion. Mitogenic stimulation leads to binding and activation of a complex composed of MTOR and RPTOR, leading to phosphorylation and release of RPS6KB1 and binding of EIF4B to eIF-3. Interacts with RNF139; the interaction leads to protein translation inhibitions in a ubiquitination-dependent manner. Interacts with DTX1, the interaction is required for deubiquitinating activity towards NOTCH1. Post-translationally, phosphorylation is enhanced upon serum stimulation. Phosphorylated during apoptosis by caspase-processed CDK11.

The protein resides in the cytoplasm. It catalyses the reaction Thiol-dependent hydrolysis of ester, thioester, amide, peptide and isopeptide bonds formed by the C-terminal Gly of ubiquitin (a 76-residue protein attached to proteins as an intracellular targeting signal).. Its function is as follows. Component of the eukaryotic translation initiation factor 3 (eIF-3) complex, which is required for several steps in the initiation of protein synthesis. The eIF-3 complex associates with the 40S ribosome and facilitates the recruitment of eIF-1, eIF-1A, eIF-2:GTP:methionyl-tRNAi and eIF-5 to form the 43S pre-initiation complex (43S PIC). The eIF-3 complex stimulates mRNA recruitment to the 43S PIC and scanning of the mRNA for AUG recognition. The eIF-3 complex is also required for disassembly and recycling of post-termination ribosomal complexes and subsequently prevents premature joining of the 40S and 60S ribosomal subunits prior to initiation. The eIF-3 complex specifically targets and initiates translation of a subset of mRNAs involved in cell proliferation, including cell cycling, differentiation and apoptosis, and uses different modes of RNA stem-loop binding to exert either translational activation or repression. In terms of biological role, deubiquitinates activated NOTCH1, promoting its nuclear import, thereby acting as a positive regulator of Notch signaling. The protein is Eukaryotic translation initiation factor 3 subunit F of Pan troglodytes (Chimpanzee).